We begin with the raw amino-acid sequence, 78 residues long: RNA-binding protein KhpA (78 aa).

Residues threonine 29–arginine 78 form the KH domain.

The protein belongs to the KhpA RNA-binding protein family.

The protein localises to the cytoplasm. A probable RNA-binding protein. This chain is RNA-binding protein KhpA, found in Chlamydia muridarum (strain MoPn / Nigg).